A 593-amino-acid polypeptide reads, in one-letter code: Corrinoid activation enzyme RamQ (593 aa).

One can recognise a 2Fe-2S ferredoxin-type domain in the interval 1 to 76 (MRVLFPLLEE…GMEIYASREQ (76 aa)). Residues cysteine 35, cysteine 41, cysteine 44, and cysteine 60 each contribute to the [2Fe-2S] cluster site.

[2Fe-2S] cluster is required as a cofactor.

In terms of biological role, involved in the degradation of the quaternary amines L-proline betaine and L-carnitine. Component of a corrinoid-dependent methyltransferase system that transfers a methyl group from L-proline betaine or L-carnitine to tetrahydrofolate (THF), forming methyl-THF, a key intermediate in the Wood-Ljungdahl acetogenesis pathway. RamQ is not required for the methyl transfer, but it stimulates reduction of reconstituted MtqC from the Co(II) state to the Co(I) state in vitro. It also stimulates the rate of THF methylation. In Eubacterium limosum, this protein is Corrinoid activation enzyme RamQ.